The chain runs to 296 residues: Transcription repressor OFP3 (296 aa).

Disordered regions lie at residues 27–115 and 131–196; these read MSRS…SANA and PSDQ…AHSS. Polar residues predominate over residues 60–69; sequence LSSTAHHPQA. The span at 78-88 shows a compositional bias: basic residues; sequence SFKRKIKRKTV. The segment covering 92 to 115 has biased composition (low complexity); that stretch reads SSRLKLSTSSSLNHRSKSSSSANA. Basic and acidic residues predominate over residues 136–159; the sequence is FVHDPEPHSSIDIKDELSVRKLDD. One can recognise an OVATE domain in the interval 228-287; it reads IVLSSVDPEKDFRESMVEMIMENKMREQKDLEDLLACYLSLNSSEYHDVIIKAFENTWLH.

As to quaternary structure, interacts with BLH1, BLH3, KNAT5 and KNAT7.

The protein resides in the nucleus. In terms of biological role, transcriptional repressor that may regulate multiple aspects of plant growth and development through the regulation of BEL1-LIKE (BLH) and KNOX TALE (KNAT) homeodomain transcription factors. The protein is Transcription repressor OFP3 (OFP3) of Arabidopsis thaliana (Mouse-ear cress).